Consider the following 71-residue polypeptide: Small integral membrane protein 31 (71 aa).

Residues 8-28 (LEVAFILLAFFIFSLFTLASI) form a helical membrane-spanning segment. Over residues 48–57 (RKRKEFKGKK) the composition is skewed to basic residues. Residues 48-71 (RKRKEFKGKKNCSDEEHKIETMQP) form a disordered region. N-linked (GlcNAc...) asparagine glycosylation is present at Asn-58. A compositionally biased stretch (basic and acidic residues) spans 58-71 (NCSDEEHKIETMQP).

It is found in the membrane. The polypeptide is Small integral membrane protein 31 (Mus musculus (Mouse)).